Here is a 164-residue protein sequence, read N- to C-terminus: Putative anionic 4-hydroxy-benzoate permease (164 aa).

Residues 1-30 are disordered; it reads CGRRRGSLAWPDASSPSANPRPGAGAAESS. 3 consecutive transmembrane segments (helical) span residues 62–82, 97–117, and 126–146; these read LWVA…LMFM, GMAQ…VGGL, and PALT…MLAG.

This sequence belongs to the major facilitator superfamily. Cyanate porter (TC 2.A.1.17) family.

It is found in the cell membrane. May be involved in uptake of anionic 4-hydroxy-benzoate. This is Putative anionic 4-hydroxy-benzoate permease from Thauera aromatica.